The following is a 221-amino-acid chain: Protein GrpE 1 (221 aa).

Disordered regions lie at residues methionine 1–glutamine 44 and valine 192–glycine 221. Low complexity predominate over residues lysine 26–glutamine 44. Positions lysine 203 to glycine 221 are enriched in basic and acidic residues.

It belongs to the GrpE family. In terms of assembly, homodimer.

The protein localises to the cytoplasm. Its function is as follows. Participates actively in the response to hyperosmotic and heat shock by preventing the aggregation of stress-denatured proteins, in association with DnaK and GrpE. It is the nucleotide exchange factor for DnaK and may function as a thermosensor. Unfolded proteins bind initially to DnaJ; upon interaction with the DnaJ-bound protein, DnaK hydrolyzes its bound ATP, resulting in the formation of a stable complex. GrpE releases ADP from DnaK; ATP binding to DnaK triggers the release of the substrate protein, thus completing the reaction cycle. Several rounds of ATP-dependent interactions between DnaJ, DnaK and GrpE are required for fully efficient folding. In Streptomyces avermitilis (strain ATCC 31267 / DSM 46492 / JCM 5070 / NBRC 14893 / NCIMB 12804 / NRRL 8165 / MA-4680), this protein is Protein GrpE 1.